A 488-amino-acid polypeptide reads, in one-letter code: Glutamyl-tRNA(Gln) amidotransferase subunit A (488 aa).

Catalysis depends on charge relay system residues Lys-78 and Ser-153. The active-site Acyl-ester intermediate is Ser-177.

The protein belongs to the amidase family. GatA subfamily. Heterotrimer of A, B and C subunits.

It catalyses the reaction L-glutamyl-tRNA(Gln) + L-glutamine + ATP + H2O = L-glutaminyl-tRNA(Gln) + L-glutamate + ADP + phosphate + H(+). Its function is as follows. Allows the formation of correctly charged Gln-tRNA(Gln) through the transamidation of misacylated Glu-tRNA(Gln) in organisms which lack glutaminyl-tRNA synthetase. The reaction takes place in the presence of glutamine and ATP through an activated gamma-phospho-Glu-tRNA(Gln). In Thermoanaerobacter pseudethanolicus (strain ATCC 33223 / 39E) (Clostridium thermohydrosulfuricum), this protein is Glutamyl-tRNA(Gln) amidotransferase subunit A.